The primary structure comprises 388 residues: Succinate--CoA ligase [ADP-forming] subunit beta (388 aa).

Residues 9-244 (KQLFAEYGLP…PSQDDAREAH (236 aa)) enclose the ATP-grasp domain. Residues K46, 53-55 (GRG), E99, T102, and E107 each bind ATP. 2 residues coordinate Mg(2+): N199 and D213. Residues N264 and 321 to 323 (GIV) contribute to the substrate site.

Belongs to the succinate/malate CoA ligase beta subunit family. As to quaternary structure, heterotetramer of two alpha and two beta subunits. It depends on Mg(2+) as a cofactor.

The enzyme catalyses succinate + ATP + CoA = succinyl-CoA + ADP + phosphate. It carries out the reaction GTP + succinate + CoA = succinyl-CoA + GDP + phosphate. It functions in the pathway carbohydrate metabolism; tricarboxylic acid cycle; succinate from succinyl-CoA (ligase route): step 1/1. Its function is as follows. Succinyl-CoA synthetase functions in the citric acid cycle (TCA), coupling the hydrolysis of succinyl-CoA to the synthesis of either ATP or GTP and thus represents the only step of substrate-level phosphorylation in the TCA. The beta subunit provides nucleotide specificity of the enzyme and binds the substrate succinate, while the binding sites for coenzyme A and phosphate are found in the alpha subunit. The protein is Succinate--CoA ligase [ADP-forming] subunit beta of Pseudomonas putida (strain ATCC 700007 / DSM 6899 / JCM 31910 / BCRC 17059 / LMG 24140 / F1).